The primary structure comprises 273 residues: Type IV secretion system protein PtlF (273 aa).

A signal peptide spans 1–20; it reads MMAARMMAAGLAATALSAHA.

Belongs to the TrbG/VirB9 family. As to quaternary structure, forms a complex with PtlI.

It localises to the cell outer membrane. Its function is as follows. Component of the type IV secretion system ptl required for secretion of assembled pertussis toxin (PTX) through the outer membrane. This is Type IV secretion system protein PtlF (ptlF) from Bordetella pertussis (strain Tohama I / ATCC BAA-589 / NCTC 13251).